The following is a 255-amino-acid chain: Sulfur carrier protein FdhD (255 aa).

Residue cysteine 103 is the Cysteine persulfide intermediate of the active site.

Belongs to the FdhD family.

The protein resides in the cytoplasm. In terms of biological role, required for formate dehydrogenase (FDH) activity. Acts as a sulfur carrier protein that transfers sulfur from IscS to the molybdenum cofactor prior to its insertion into FDH. This Sulfurisphaera tokodaii (strain DSM 16993 / JCM 10545 / NBRC 100140 / 7) (Sulfolobus tokodaii) protein is Sulfur carrier protein FdhD.